Consider the following 282-residue polypeptide: HTH-type transcriptional activator RhaR (282 aa).

The region spanning 179–277 (DKLITALANS…GMTPSQWRHL (99 aa)) is the HTH araC/xylS-type domain. 2 consecutive DNA-binding regions (H-T-H motif) follow at residues 196–217 (DAFC…RAQT) and 244–267 (ISEI…TRET).

As to quaternary structure, binds DNA as a dimer.

It is found in the cytoplasm. Functionally, activates expression of the rhaSR operon in response to L-rhamnose. This is HTH-type transcriptional activator RhaR from Salmonella schwarzengrund (strain CVM19633).